The primary structure comprises 163 residues: Peptide deformylase (163 aa).

Residues Cys-91 and His-133 each contribute to the Fe cation site. Glu-134 is an active-site residue. His-137 is a Fe cation binding site.

It belongs to the polypeptide deformylase family. Fe(2+) is required as a cofactor.

The enzyme catalyses N-terminal N-formyl-L-methionyl-[peptide] + H2O = N-terminal L-methionyl-[peptide] + formate. In terms of biological role, removes the formyl group from the N-terminal Met of newly synthesized proteins. Requires at least a dipeptide for an efficient rate of reaction. N-terminal L-methionine is a prerequisite for activity but the enzyme has broad specificity at other positions. This is Peptide deformylase from Lachnoclostridium phytofermentans (strain ATCC 700394 / DSM 18823 / ISDg) (Clostridium phytofermentans).